Reading from the N-terminus, the 266-residue chain is Receptor-recognizing protein gp38 (266 aa).

10 consecutive short sequence motifs (GRM) follow at residues 116-123, 126-137, 157-171, 174-184, 187-191, 194-200, 202-209, 214-220, 223-228, and 232-246; these read GRGGNGGY, SGGDGNGTQGGH, AGGG…RPHS, KWQDIGGGGGR, GGAGG, YSGGAAS, EGPGGGYD, HSGAGGN, AAGQNA, and GGKV…ASGH.

This sequence belongs to the receptor-recognizing protein gp38 family.

It is found in the virion. Its function is as follows. Receptor binding protein (RBP) that is at the tip of the long tail fibers and serves as the phage recognition site for the attachment host receptor. Probably uses the host receptor OmpA. This chain is Receptor-recognizing protein gp38 (38), found in Enterobacteria phage Ox2 (Bacteriophage Ox2).